Reading from the N-terminus, the 222-residue chain is Voltage-dependent calcium channel gamma-1 subunit (222 aa).

Over Met1–Arg10 the chain is Cytoplasmic. Residues Val11–Thr29 form a helical membrane-spanning segment. Topologically, residues Asp30–Ala108 are extracellular. N-linked (GlcNAc...) asparagine glycosylation is found at Asn43 and Asn79. A disulfide bond links Cys57 and Cys80. A helical transmembrane segment spans residues Ala109–Leu129. Topologically, residues Gly130–Asp134 are cytoplasmic. The helical transmembrane segment at Tyr135–Val155 threads the bilayer. Over Glu156–Ser179 the chain is Extracellular. The helical transmembrane segment at Trp180–Leu204 threads the bilayer. Residues Pro205–His222 are Cytoplasmic-facing.

This sequence belongs to the PMP-22/EMP/MP20 family. CACNG subfamily. Component of a calcium channel complex consisting of a pore-forming alpha subunit (CACNA1S) and the ancillary subunits CACNB1 or CACNB2, CACNG1 and CACNA2D1. The channel complex contains alpha, beta, gamma and delta subunits in a 1:1:1:1 ratio, i.e. it contains either CACNB1 or CACNB2. In terms of processing, N-glycosylated. Skeletal muscle.

It is found in the cell membrane. The protein resides in the sarcolemma. Its function is as follows. Regulatory subunit of the voltage-gated calcium channel that gives rise to L-type calcium currents in skeletal muscle. Regulates channel inactivation kinetics. The polypeptide is Voltage-dependent calcium channel gamma-1 subunit (CACNG1) (Homo sapiens (Human)).